The sequence spans 483 residues: CBL-interacting serine/threonine-protein kinase 19 (483 aa).

Residues tyrosine 28–phenylalanine 282 form the Protein kinase domain. Residues leucine 34–valine 42 and lysine 57 each bind ATP. The Proton acceptor role is filled by aspartate 150. The segment at aspartate 168–glutamate 197 is activation loop. Serine 172 carries the post-translational modification Phosphoserine. A Phosphothreonine modification is found at threonine 186. Polar residues predominate over residues serine 313–serine 322. The interval serine 313–serine 338 is disordered. In terms of domain architecture, NAF spans proline 340 to glutamate 364. The interval glycine 367–valine 396 is PPI. The interval asparagine 459–aspartate 483 is disordered.

The protein belongs to the protein kinase superfamily. CAMK Ser/Thr protein kinase family. SNF1 subfamily. It depends on Mn(2+) as a cofactor.

It carries out the reaction L-seryl-[protein] + ATP = O-phospho-L-seryl-[protein] + ADP + H(+). The enzyme catalyses L-threonyl-[protein] + ATP = O-phospho-L-threonyl-[protein] + ADP + H(+). In terms of biological role, CIPK serine-threonine protein kinases interact with CBL proteins. Binding of a CBL protein to the regulatory NAF domain of CIPK protein lead to the activation of the kinase in a calcium-dependent manner. The protein is CBL-interacting serine/threonine-protein kinase 19 (CIPK19) of Arabidopsis thaliana (Mouse-ear cress).